A 365-amino-acid chain; its full sequence is tRNA(Met) cytidine acetate ligase (365 aa).

ATP is bound by residues 7 to 20, glycine 96, asparagine 152, and arginine 175; that span reads IAEFNPFHNGHKYL.

It belongs to the TmcAL family.

It is found in the cytoplasm. It catalyses the reaction cytidine(34) in elongator tRNA(Met) + acetate + ATP = N(4)-acetylcytidine(34) in elongator tRNA(Met) + AMP + diphosphate. Catalyzes the formation of N(4)-acetylcytidine (ac(4)C) at the wobble position of elongator tRNA(Met), using acetate and ATP as substrates. First activates an acetate ion to form acetyladenylate (Ac-AMP) and then transfers the acetyl group to tRNA to form ac(4)C34. The chain is tRNA(Met) cytidine acetate ligase from Streptococcus pneumoniae (strain 70585).